A 433-amino-acid chain; its full sequence is Homoserine dehydrogenase (433 aa).

The NADPH site is built by Thr13 and Val14. Val14 and Val33 together coordinate NAD(+). Val14 lines the NADP(+) pocket. NADPH-binding residues include Lys45 and Lys105. 2 residues coordinate NADP(+): Lys45 and Lys105. Na(+) is bound by residues Glu129, Val132, Gly134, and Ile136. The NADP(+) site is built by Gly187 and Glu190. Residues Glu190 and Asp201 each contribute to the L-homoserine site. Lys205 functions as the Proton donor in the catalytic mechanism. Gly302 lines the NADPH pocket. Gly302 provides a ligand contact to NAD(+). Position 302 (Gly302) interacts with NADP(+). Residues 350 to 426 (FLRIHVKDEV…VVQEVKSTYR (77 aa)) enclose the ACT domain.

This sequence belongs to the homoserine dehydrogenase family. Homotetramer. Requires a metal cation as cofactor.

It localises to the cytoplasm. Its subcellular location is the secreted. It catalyses the reaction L-homoserine + NADP(+) = L-aspartate 4-semialdehyde + NADPH + H(+). It functions in the pathway amino-acid biosynthesis; L-methionine biosynthesis via de novo pathway; L-homoserine from L-aspartate: step 3/3. The protein operates within amino-acid biosynthesis; L-threonine biosynthesis; L-threonine from L-aspartate: step 3/5. Its activity is regulated as follows. Feedback inhibition by threonine. Activated by sodium ions. Catalyzes the conversion of L-aspartate-beta-semialdehyde (L-Asa) to L-homoserine (L-Hse), the third step in the biosynthesis of threonine and methionine from aspartate. Utilizes NADPH but not NADH as coenzyme. This Bacillus subtilis (strain 168) protein is Homoserine dehydrogenase (hom).